We begin with the raw amino-acid sequence, 69 residues long: DNA gyrase inhibitor YacG (69 aa).

Zn(2+) contacts are provided by Cys-7, Cys-10, Cys-26, and Cys-30.

The protein belongs to the DNA gyrase inhibitor YacG family. As to quaternary structure, interacts with GyrB. It depends on Zn(2+) as a cofactor.

Inhibits all the catalytic activities of DNA gyrase by preventing its interaction with DNA. Acts by binding directly to the C-terminal domain of GyrB, which probably disrupts DNA binding by the gyrase. The sequence is that of DNA gyrase inhibitor YacG from Shewanella baltica (strain OS195).